The primary structure comprises 141 residues: Large ribosomal subunit protein uL11 (141 aa).

This sequence belongs to the universal ribosomal protein uL11 family. Part of the ribosomal stalk of the 50S ribosomal subunit. Interacts with L10 and the large rRNA to form the base of the stalk. L10 forms an elongated spine to which L12 dimers bind in a sequential fashion forming a multimeric L10(L12)X complex. Post-translationally, one or more lysine residues are methylated.

Its function is as follows. Forms part of the ribosomal stalk which helps the ribosome interact with GTP-bound translation factors. In Chlamydia trachomatis serovar L2 (strain ATCC VR-902B / DSM 19102 / 434/Bu), this protein is Large ribosomal subunit protein uL11.